Consider the following 615-residue polypeptide: Chaperone protein HscA homolog (615 aa).

The protein belongs to the heat shock protein 70 family.

Functionally, chaperone involved in the maturation of iron-sulfur cluster-containing proteins. Has a low intrinsic ATPase activity which is markedly stimulated by HscB. The chain is Chaperone protein HscA homolog from Aeromonas hydrophila subsp. hydrophila (strain ATCC 7966 / DSM 30187 / BCRC 13018 / CCUG 14551 / JCM 1027 / KCTC 2358 / NCIMB 9240 / NCTC 8049).